We begin with the raw amino-acid sequence, 204 residues long: MATASPSVFLLMVNGQVESAQFPEYDDLYCKYCFVYGQDWAPTAGLEEGISQITSKSQDVRQALVWNFPIDVTFKSTNPYGWPQIVLSVYGPDVFGNDVVRGYGAVHVPFSPGRHKRTIPMFVPESTSKLQKFTSWFMGRRPEYTDPKVVAQGEGREVTRVRSQGFVTLLFNVVTKDMRKLGYDTGPSDTQGVLGPSPPQSFPQ.

Positions 9 to 127 constitute a C2 B9-type domain; sequence FLLMVNGQVE…TIPMFVPEST (119 aa). The disordered stretch occupies residues 182–204; the sequence is GYDTGPSDTQGVLGPSPPQSFPQ.

This sequence belongs to the B9D family. Part of the tectonic-like complex (also named B9 complex).

It is found in the cytoplasm. It localises to the cytoskeleton. The protein localises to the cilium basal body. The protein resides in the cilium axoneme. In terms of biological role, component of the tectonic-like complex, a complex localized at the transition zone of primary cilia and acting as a barrier that prevents diffusion of transmembrane proteins between the cilia and plasma membranes. Required for ciliogenesis and sonic hedgehog/SHH signaling. The polypeptide is B9 domain-containing protein 1 (B9D1) (Homo sapiens (Human)).